The primary structure comprises 30 residues: Babycurus-toxin 1 (30 aa).

Residues 2 to 30 enclose the LCN-type CS-alpha/beta domain; that stretch reads KDGYPTNSKGCKISGCLPGENKFCLNECQ.

This sequence belongs to the long (4 C-C) scorpion toxin superfamily. Sodium channel inhibitor family. In terms of tissue distribution, expressed by the venom gland.

The protein localises to the secreted. In terms of biological role, binds to sodium channels (Nav) and inhibits both the activation and inactivation of the activated channels, thereby blocking neuronal transmission. The sequence is that of Babycurus-toxin 1 from Babycurus centrurimorphus (East African scorpion).